A 639-amino-acid chain; its full sequence is Polyphenol oxidase, chloroplastic (639 aa).

The transit peptide at 1–101 (MATLSSPTII…EGANYYNTLA (101 aa)) directs the protein to the chloroplast. The segment at 35–58 (GVRSVNGKVSCQTKNNNGNDENNQ) is disordered. 2 cysteine pairs are disulfide-bonded: cysteine 111–cysteine 127 and cysteine 126–cysteine 194. Cu cation is bound by residues histidine 193, histidine 214, histidine 223, histidine 354, histidine 358, and histidine 388. Residues 197–214 (CDGSYPVLGHNDTRLEVH) constitute a cross-link (2'-(S-cysteinyl)-histidine (Cys-His)).

The protein belongs to the tyrosinase family. Requires Cu(2+) as cofactor.

The protein resides in the plastid. It localises to the chloroplast thylakoid lumen. The enzyme catalyses 2 catechol + O2 = 2 1,2-benzoquinone + 2 H2O. Its function is as follows. Catalyzes the oxidation of mono- and o-diphenols to o-diquinones. This chain is Polyphenol oxidase, chloroplastic, found in Spinacia oleracea (Spinach).